The following is a 494-amino-acid chain: MAALSPTVRAALQSQAAGEEPWEQRFKRIMSTTLKNPGAFRSQPWFTRRDAILEAVLPSRTDPTHEKVLAVVNGLVQAKAVRADEGGAIYDALLQRVGRYNSSNVQSNLDHLVQDVREAVAMKAQEERGSMGSLVALNGFLSTLPSTVNHGQSDYVGFVGALRQLIAEVPQTLVYRTGPFYYFQTSRQGLQTVNLTKAFQNLSALWGVTTSAQTPMATAALLTPNTRLLLLLVAPFTDSRTVNGDTYLGHLLTLYREALRDARLDEITYSEIRDVARATGQDDSRALQSTLNFLVSQQTKRLPEDVFLTPQQTTVLRYLQKAIELQHAREPHERADRLLDAVVADLEPSFYSKHRHFITKLLDYFQRAAALNPHYFMSIVKNKHWTPPPGFYTGDFELPEVVHDSFQWDDTEDGAWSRPLAEQVNEEEPNTDYLAEYRSAFSDNREEKNQKKEWESLVDMMARWKTHRQSALDLDDEIEELSSTNPFKHLQPQF.

The tract at residues 1–101 (MAALSPTVRA…ALLQRVGRYN (101 aa)) is peripentonal hexon-tethering domain. Residues 132–245 (GSLVALNGFL…FTDSRTVNGD (114 aa)) form a binding to hexon-linking protein region. T268 carries the post-translational modification Phosphothreonine; by host. Residues S439 and S456 each carry the phosphoserine; by host modification. The propeptide occupies 484–494 (TNPFKHLQPQF).

Belongs to the adenoviridae hexon-linking protein IIIa family. In terms of assembly, interacts with hexon proteins; this interaction tethers the peripentonal hexons to hexons situated in the facet. Interacts with the penton protein (via N-terminus). Interacts with packaging protein 3; this interaction is required to promote correct genome packaging. Cleaved near the C-terminus by the viral protease during virion maturation to form the mature protein.

The protein resides in the virion. It is found in the host nucleus. Structural component of the virion that acts as a cement protein on the capsid exterior which mediates the interactions between the hexons, including the peripentonal hexons, and reaches all the way to the penton vertices. Two hexon linking proteins IIIa, one from each facet, stabilize the unique edge interface between a pair of facets. As the virus enters the host cell, hexon linking proteins IIIa are shed concomitant with virion acidification in the endosome. During virus assembly, seems to play a role in the serotype specificity of the packaging of viral DNA via its interaction with packaging protein 3. This Murine adenovirus A serotype 1 (MAdV-1) protein is Pre-hexon-linking protein IIIa.